The following is a 252-amino-acid chain: 3-deoxy-manno-octulosonate cytidylyltransferase (252 aa).

It belongs to the KdsB family.

It is found in the cytoplasm. The enzyme catalyses 3-deoxy-alpha-D-manno-oct-2-ulosonate + CTP = CMP-3-deoxy-beta-D-manno-octulosonate + diphosphate. The protein operates within nucleotide-sugar biosynthesis; CMP-3-deoxy-D-manno-octulosonate biosynthesis; CMP-3-deoxy-D-manno-octulosonate from 3-deoxy-D-manno-octulosonate and CTP: step 1/1. Its pathway is bacterial outer membrane biogenesis; lipopolysaccharide biosynthesis. Functionally, activates KDO (a required 8-carbon sugar) for incorporation into bacterial lipopolysaccharide in Gram-negative bacteria. This Phocaeicola vulgatus (strain ATCC 8482 / DSM 1447 / JCM 5826 / CCUG 4940 / NBRC 14291 / NCTC 11154) (Bacteroides vulgatus) protein is 3-deoxy-manno-octulosonate cytidylyltransferase.